Consider the following 133-residue polypeptide: Norrin (133 aa).

The signal sequence occupies residues 1–24 (MRKHVLAASFSMLSLLVIMGDTDS). 4 cysteine pairs are disulfide-bonded: cysteine 39–cysteine 96, cysteine 55–cysteine 110, cysteine 65–cysteine 126, and cysteine 69–cysteine 128. The CTCK domain maps to 39-132 (CMRHHYVDSI…ILSCHCEECN (94 aa)).

As to quaternary structure, homodimer; disulfide-linked. Component of a complex, at least composed of TSPAN12, FZD4, LRP5/6 and norrin (NDP). Binds FZD4 with high affinity. Interacts with LRP6 (via Beta-propellers 1 and 2). Expressed in the outer nuclear, inner nuclear and ganglion cell layers of the retina, and in fetal and adult brain.

The protein localises to the secreted. Functionally, activates the canonical Wnt signaling pathway through FZD4 and LRP5 coreceptor. Plays a central role in retinal vascularization by acting as a ligand for FZD4 that signals via stabilizing beta-catenin (CTNNB1) and activating LEF/TCF-mediated transcriptional programs. Acts in concert with TSPAN12 to activate FZD4 independently of the Wnt-dependent activation of FZD4, suggesting the existence of a Wnt-independent signaling that also promote accumulation the beta-catenin (CTNNB1). May be involved in a pathway that regulates neural cell differentiation and proliferation. Possible role in neuroectodermal cell-cell interaction. The polypeptide is Norrin (NDP) (Homo sapiens (Human)).